The following is a 602-amino-acid chain: uncharacterized protein (602 aa).

The protein belongs to the glycosyltransferase 2 family.

This is an uncharacterized protein from Rickettsia felis (strain ATCC VR-1525 / URRWXCal2) (Rickettsia azadi).